A 540-amino-acid chain; its full sequence is Coatomer subunit delta (540 aa).

The disordered stretch occupies residues 169 to 263 (RHEEMLRGKR…GMILGGKSGT (95 aa)). Gly residues predominate over residues 179-197 (SGGYTGISGGGGMGSGGMG). The segment covering 212-229 (NNNNNNNNNNNNNNNNNN) has biased composition (low complexity). Residues 238–250 (SPNTSRPSAASSG) are compositionally biased toward polar residues. A compositionally biased stretch (gly residues) spans 251-261 (SQGGMILGGKS). One can recognise an MHD domain in the interval 304-540 (QEGVHITVEE…TLSVDTYEIK (237 aa)).

The protein belongs to the adaptor complexes medium subunit family. Delta-COP subfamily. In terms of assembly, oligomeric complex that consists of at least the alpha, beta, beta', gamma, delta, epsilon and zeta subunits.

Its subcellular location is the cytoplasm. It localises to the golgi apparatus membrane. It is found in the cytoplasmic vesicle. The protein resides in the COPI-coated vesicle membrane. The coatomer is a cytosolic protein complex that binds to dilysine motifs and reversibly associates with Golgi non-clathrin-coated vesicles, which further mediate biosynthetic protein transport from the ER, via the Golgi up to the trans Golgi network. Coatomer complex is required for budding from Golgi membranes, and is essential for the retrograde Golgi-to-ER transport of dilysine-tagged proteins. This Dictyostelium discoideum (Social amoeba) protein is Coatomer subunit delta (copd).